A 255-amino-acid chain; its full sequence is tRNA (guanine-N(7)-)-methyltransferase (255 aa).

A compositionally biased stretch (basic and acidic residues) spans 1–11 (MSISDNSRDQL). The segment at 1–25 (MSISDNSRDQLGELPAGRPLQSDFD) is disordered. Residues glutamate 83, glutamate 108, aspartate 135, and aspartate 158 each contribute to the S-adenosyl-L-methionine site. The active site involves aspartate 158. Lysine 162 contributes to the substrate binding site. Positions 164–169 (RHNKRR) are interaction with RNA. Substrate contacts are provided by residues aspartate 194 and 232–235 (TKFE).

This sequence belongs to the class I-like SAM-binding methyltransferase superfamily. TrmB family.

It catalyses the reaction guanosine(46) in tRNA + S-adenosyl-L-methionine = N(7)-methylguanosine(46) in tRNA + S-adenosyl-L-homocysteine. It functions in the pathway tRNA modification; N(7)-methylguanine-tRNA biosynthesis. Its function is as follows. Catalyzes the formation of N(7)-methylguanine at position 46 (m7G46) in tRNA. The chain is tRNA (guanine-N(7)-)-methyltransferase from Corynebacterium glutamicum (strain ATCC 13032 / DSM 20300 / JCM 1318 / BCRC 11384 / CCUG 27702 / LMG 3730 / NBRC 12168 / NCIMB 10025 / NRRL B-2784 / 534).